We begin with the raw amino-acid sequence, 256 residues long: Protein RKD4 (256 aa).

Residues 130-216 (EKVTVKKKRN…MEEEVKNLEE (87 aa)) enclose the RWP-RK domain. The stretch at 190-224 (RKLKSLNSLIKNLKNVGMEEEVKNLEEHRFLIEQE) forms a coiled coil.

The protein resides in the nucleus. Putative transcription factor. The protein is Protein RKD4 (RKD4) of Arabidopsis thaliana (Mouse-ear cress).